The following is a 333-amino-acid chain: Alpha-N-acetylgalactosaminide alpha-2,6-sialyltransferase 6 (333 aa).

A compositionally biased stretch (polar residues) spans 1–12 (MACSRPPSQCDP). The tract at residues 1-27 (MACSRPPSQCDPTTLPPGPPAGRWPLP) is disordered. Residues 1–43 (MACSRPPSQCDPTTLPPGPPAGRWPLPFSRRRREMSSNKEQRS) lie on the Cytoplasmic side of the membrane. A helical; Signal-anchor for type II membrane protein transmembrane segment spans residues 44–64 (AVFVILFALITILILYSSNSA). Residues 65–333 (NEVFHYGSLR…GITFSHPSWT (269 aa)) are Lumenal-facing. N-linked (GlcNAc...) asparagine glycosylation is present at Asn-98. Residues Cys-108 and Cys-256 are joined by a disulfide bond.

Belongs to the glycosyltransferase 29 family. In terms of tissue distribution, widely expressed, the gene expression is most abundant in colon, brain, liver, and heart.

The protein localises to the golgi apparatus membrane. It carries out the reaction a ganglioside GM1b (d18:1(4E)) + CMP-N-acetyl-beta-neuraminate = a ganglioside GD1alpha (d18:1(4E)) + CMP + H(+). It catalyses the reaction a ganglioside GD1a (d18:1(4E)) + CMP-N-acetyl-beta-neuraminate = a ganglioside GT1aalpha (d18:1(4E)) + CMP + H(+). The catalysed reaction is a ganglioside GT1b (d18:1(4E)) + CMP-N-acetyl-beta-neuraminate = a ganglioside GQ1balpha (d18:1(4E)) + CMP + H(+). The enzyme catalyses N-acetyl-alpha-neuraminosyl-(2-&gt;3)-beta-D-galactosyl-(1-&gt;3)-N-acetyl-beta-D-glucosaminyl-(1-&gt;3)-beta-D-galactosyl-(1-&gt;4)-beta-D-glucosyl-(1&lt;-&gt;1')-N-acyl-sphing-4-enine + CMP-N-acetyl-beta-neuraminate = N-acetyl-alpha-neuraminosyl-(2-&gt;3)-beta-D-galactosyl-(1-&gt;3)-[N-acetyl-alpha-neuraminosyl-(2-&gt;6)]-N-acetyl-beta-D-glucosaminyl-(1-&gt;3)-beta-D-galactosyl-(1-&gt;4)-beta-D-glucosyl-(1&lt;-&gt;1')-N-acyl-sphing-4-enine + CMP + H(+). It carries out the reaction a globoside MSGG + CMP-N-acetyl-beta-neuraminate = a globoside DSGG + CMP + H(+). It catalyses the reaction 3-O-[alpha-Neu5Ac-(2-&gt;3)-beta-D-Gal-(1-&gt;3)-alpha-D-GalNAc]-L-Ser-[protein] + CMP-N-acetyl-beta-neuraminate = a 3-O-{alpha-Neu5Ac-(2-&gt;3)-beta-D-Gal-(1-&gt;3)-[alpha-Neu5Ac-(2-&gt;6)]-alpha-D-GalNAc}-L-seryl-[protein] + CMP + H(+). The catalysed reaction is 3-O-[alpha-Neu5Ac-(2-&gt;3)-beta-D-Gal-(1-&gt;3)-alpha-D-GalNAc]-L-Thr-[protein] + CMP-N-acetyl-beta-neuraminate = a 3-O-{alpha-Neu5Ac-(2-&gt;3)-beta-D-Gal-(1-&gt;3)-[alpha-Neu5Ac-(2-&gt;6)]-alpha-D-GalNAc}-L-threonyl-[protein] + CMP + H(+). In terms of biological role, transfers the sialyl group (N-acetyl-alpha-neuraminyl or NeuAc) from CMP-NeuAc onto glycolipids, forming an alpha-2,6-linkage. Produces branched type disialyl structures by transfer of a sialyl group onto the GalNAc or GlcNAc residue inside backbone core chains having a terminal sialic acid with an alpha-2,3-linkage on Gal. ST6GalNAcVI prefers glycolipids to glycoproteins, predominantly catalyzing the biosynthesis of ganglioside GD1alpha from GM1b. Also has activity toward GD1a and GT1b, and can generate DSGG (disialylgalactosylgloboside) from MSGG (monosialylgalactosylgloboside). Besides GMb1, MSGG and other glycolipids, it shows activity towards sialyl Lc4Cer generating disialyl Lc4Cer, which can lead to the synthesis of disialyl Lewis a (Le(a)), suggested to be a cancer-associated antigen. The polypeptide is Alpha-N-acetylgalactosaminide alpha-2,6-sialyltransferase 6 (St6galnac6) (Mus musculus (Mouse)).